A 390-amino-acid chain; its full sequence is Immunoglobulin mu Fc receptor (390 aa).

An N-terminal signal peptide occupies residues 1 to 16; sequence MDFWLWPLYFLPVSGA. The Extracellular portion of the chain corresponds to 17-251; it reads LRILPEVKVE…GSQSGREGQG (235 aa). The Ig-like domain occupies 23–123; the sequence is VKVEGELGGS…KTQKVTLNVH (101 aa). The tract at residues 33–115 is CDR4; sequence VTIKCPLPEM…AGMNTDRGKT (83 aa). Intrachain disulfides connect cysteine 37-cysteine 104 and cysteine 49-cysteine 58. Positions 40–45 are CDR1; the sequence is PEMHVR. Residues 59 to 70 form a CDR2 region; that stretch reads GTVVSTTNFIKA. Phosphothreonine is present on threonine 92. Residues 106-115 are CDR3; sequence AGMNTDRGKT. Residues 166–204 form a disordered region; it reads PAQRGKVPPVHHSSPTTQITHRPRVSRASSVAGDKPRTF. The helical transmembrane segment at 252 to 272 threads the bilayer; the sequence is FHILIPTILGLFLLALLGLVV. The Cytoplasmic portion of the chain corresponds to 273-390; it reads KRAVERRKAL…DSDDYINVPA (118 aa). Composition is skewed to low complexity over residues 293–311 and 325–334; these read MRAL…PRSQ and ADAAGTGEAP. A disordered region spans residues 293-348; sequence MRALESSQRPRGSPRPRSQNNIYSACPRRARGADAAGTGEAPVPGPGAPLPPAPLQ. Over residues 335 to 346 the composition is skewed to pro residues; that stretch reads VPGPGAPLPPAP.

Interacts (via Ig-like domain) with IGHM (via CH4/Cmu4 domain), both secreted and membrane-bound IgM; the interaction is glycan-independent and multivalent theoretically involving up to eight binding sites for the IgM pentamer. Post-translationally, phosphorylated on both Tyr and Ser residues. O-glycosylated. Sialylated. O-linked glycans regulate trafficking to the plasma membrane. Expressed by CD19-positive B cells and CD4-positive and CD8-positive T cell populations in primary and secondary lymphoid tissues (at protein level). Among B cell subsets, detected in a subset of bone marrow pro- and pre-B cells, in most follicular and memory B cells and in a small subset of germinal center B cells (at protein level). Expressed at lower levels in CD56-positive NK cells (at protein level). Expressed in lymph nodes, lung, thymus and kidneys. Very weak expression detected in spleen, liver, heart, and salivary gland.

The protein localises to the cell membrane. It localises to the early endosome membrane. The protein resides in the golgi apparatus. Its subcellular location is the trans-Golgi network membrane. It is found in the lysosome membrane. The protein localises to the secreted. In terms of biological role, high-affinity Fc receptor for immunoglobulin M (IgM), both secreted and membrane-bound IgM. Primarily regulates IgM transport and homeostasis. In lymphoid cells, enables exocytosis of membrane-bound IgM on the plasma membrane as well as endocytosis of IgM-antigen complexes toward lysosomes for degradation. In mucosal epithelium, mediates retrotranscytosis of antigen-IgM complexes across mucosal M cells toward antigen-presenting cells in mucosal lymphoid tissues. Triggers costimulatory signaling and mediates most of IgM effector functions involved in B cell development and primary immune response to infection. Likely limits tonic IgM BCR signaling to self-antigens for proper negative selection of autoreactive B cells in the bone marrow and for the maintenance of regulatory B cell pool in peripheral lymphoid organs. Mediates antibody responses to T cell-dependent and T cell-independent antigens and promotes induction of an efficient neutralizing IgG response. Engages in cross-talk with antigen-receptor signaling via the non-canonical NF-kappa-B, MAP kinases and calcium signaling pathways. This Homo sapiens (Human) protein is Immunoglobulin mu Fc receptor.